Reading from the N-terminus, the 164-residue chain is Crossover junction endodeoxyribonuclease RuvC (164 aa).

Active-site residues include aspartate 7, glutamate 67, and aspartate 140. Positions 7, 67, and 140 each coordinate Mg(2+).

Belongs to the RuvC family. As to quaternary structure, homodimer which binds Holliday junction (HJ) DNA. The HJ becomes 2-fold symmetrical on binding to RuvC with unstacked arms; it has a different conformation from HJ DNA in complex with RuvA. In the full resolvosome a probable DNA-RuvA(4)-RuvB(12)-RuvC(2) complex forms which resolves the HJ. The cofactor is Mg(2+).

The protein resides in the cytoplasm. It catalyses the reaction Endonucleolytic cleavage at a junction such as a reciprocal single-stranded crossover between two homologous DNA duplexes (Holliday junction).. In terms of biological role, the RuvA-RuvB-RuvC complex processes Holliday junction (HJ) DNA during genetic recombination and DNA repair. Endonuclease that resolves HJ intermediates. Cleaves cruciform DNA by making single-stranded nicks across the HJ at symmetrical positions within the homologous arms, yielding a 5'-phosphate and a 3'-hydroxyl group; requires a central core of homology in the junction. The consensus cleavage sequence is 5'-(A/T)TT(C/G)-3'. Cleavage occurs on the 3'-side of the TT dinucleotide at the point of strand exchange. HJ branch migration catalyzed by RuvA-RuvB allows RuvC to scan DNA until it finds its consensus sequence, where it cleaves and resolves the cruciform DNA. This is Crossover junction endodeoxyribonuclease RuvC from Finegoldia magna (strain ATCC 29328 / DSM 20472 / WAL 2508) (Peptostreptococcus magnus).